Consider the following 590-residue polypeptide: Protein NRT1/ PTR FAMILY 6.4 (590 aa).

The interval 1–24 (MVHVSSSHGAKDGSEEAYDYRGNP) is disordered. 12 helical membrane passes run 48–68 (ICVM…LHIS), 73–93 (ATIV…GGFL), 104–124 (VAIS…ATTI), 147–167 (GHQL…GGGI), 197–217 (FYFS…YVQD), 222–242 (GWGY…LLCG), 332–352 (VKLV…WTIY), 371–391 (GSFT…ILLF), 419–439 (IGVG…IENA), 453–473 (AFWL…AYVG), 492–512 (GLFL…VSLV), and 533–553 (FYWL…VFAM).

The protein belongs to the major facilitator superfamily. Proton-dependent oligopeptide transporter (POT/PTR) (TC 2.A.17) family. Expressed in leaves, flowers and siliques. Detected in leaves.

It is found in the membrane. Low-affinity nitrate transporter. This Arabidopsis thaliana (Mouse-ear cress) protein is Protein NRT1/ PTR FAMILY 6.4 (NPF6.4).